Consider the following 118-residue polypeptide: Large ribosomal subunit protein uL18 (118 aa).

Residues 1 to 25 (MITKPDKNKVRQKRHRRVRGKLSGT) are disordered. The span at 10 to 20 (VRQKRHRRVRG) shows a compositional bias: basic residues.

Belongs to the universal ribosomal protein uL18 family. In terms of assembly, part of the 50S ribosomal subunit; part of the 5S rRNA/L5/L18/L25 subcomplex. Contacts the 5S and 23S rRNAs.

In terms of biological role, this is one of the proteins that bind and probably mediate the attachment of the 5S RNA into the large ribosomal subunit, where it forms part of the central protuberance. The protein is Large ribosomal subunit protein uL18 of Streptococcus gordonii (strain Challis / ATCC 35105 / BCRC 15272 / CH1 / DL1 / V288).